Consider the following 262-residue polypeptide: Bacteriorhodopsin (262 aa).

Positions 1 to 13 are excised as a propeptide; sequence MLELLPTAVEGVS. The residue at position 14 (Gln-14) is a Pyrrolidone carboxylic acid. The Extracellular segment spans residues 14–22; sequence QAQITGRPE. A helical membrane pass occupies residues 23 to 42; it reads WIWLALGTALMGLGTLYFLV. The Cytoplasmic segment spans residues 43 to 56; it reads KGMGVSDPDAKKFY. Residues 57–75 form a helical membrane-spanning segment; it reads AITTLVPAIAFTMYLSMLL. The Extracellular segment spans residues 76–92; sequence GYGLTMVPFGGEQNPIY. The helical transmembrane segment at 93–109 threads the bilayer; the sequence is WARYADWLFTTPLLLLD. The Cytoplasmic portion of the chain corresponds to 110-120; the sequence is LALLVDADQGT. A helical transmembrane segment spans residues 121 to 140; sequence ILALVGADGIMIGTGLVGAL. Over 141–147 the chain is Extracellular; sequence TKVYSYR. Residues 148–167 form a helical membrane-spanning segment; the sequence is FVWWAISTAAMLYILYVLFF. Topologically, residues 168-185 are cytoplasmic; it reads GFTSKAESMRPEVASTFK. The helical transmembrane segment at 186–204 threads the bilayer; it reads VLRNVTVVLWSAYPVVWLI. Topologically, residues 205–216 are extracellular; the sequence is GSEGAGIVPLNI. Residues 217-236 form a helical membrane-spanning segment; it reads ETLLFMVLDVSAKVGFGLIL. An N6-(retinylidene)lysine modification is found at Lys-229. The Cytoplasmic portion of the chain corresponds to 237–262; that stretch reads LRSRAIFGEAEAPEPSAGDGAAATSD.

In terms of assembly, homotrimer. Post-translationally, the covalent binding of retinal to the apoprotein, bacterioopsin, generates bacteriorhodopsin.

It localises to the cell membrane. Its function is as follows. Light-driven proton pump. The chain is Bacteriorhodopsin (bop) from Halobacterium salinarum (strain ATCC 700922 / JCM 11081 / NRC-1) (Halobacterium halobium).